Reading from the N-terminus, the 26-residue chain is Acetyl-CoA acetyltransferase (26 aa).

Catalysis depends on Cys-21, which acts as the Acyl-thioester intermediate.

Belongs to the thiolase-like superfamily. Thiolase family. As to quaternary structure, homotetramer. In terms of processing, succinylation, adjacent to a coenzyme A binding site. Desuccinylated by SIRT5.

Its subcellular location is the mitochondrion. The catalysed reaction is 2 acetyl-CoA = acetoacetyl-CoA + CoA. This Sus scrofa (Pig) protein is Acetyl-CoA acetyltransferase.